The chain runs to 4555 residues: Protocadherin Fat 3 (4555 aa).

Positions 1–31 (MGVTMRHCIDTRPPSCLIFLLLKLCATVSQG) are cleaved as a signal peptide. The Extracellular portion of the chain corresponds to 32-4153 (LPGTGPLGFH…AGHSYVGKEE (4122 aa)). Cadherin domains follow at residues 43–157 (THAL…RPLF), 158–265 (SPTT…APII), 263–374 (PIIH…TPIK), 376–471 (EKDV…TPEF), 472–577 (QETL…SPLF), 578–680 (EKVA…SKSF), 726–830 (KSFP…SPVF), 831–935 (LQDS…SPAF), 936–1042 (IPSS…TPYF), 1043–1147 (PDFA…APLT), 1148–1253 (SEPI…KPQF), 1254–1358 (PEKV…SPIP), 1362–1459 (DEPF…GPEF), 1460–1565 (SQPH…SPYF), 1566–1768 (TNPL…PPVF), 1769–1882 (LFSQ…PPVF), 1883–1985 (TQAV…TQSF), 1982–2083 (TQSF…SPVF), 2084–2185 (VGLP…MPVF), 2186–2286 (DKPF…PPVF), 2287–2393 (DQPT…PPVF), 2394–2495 (NQLI…SPAF), 2496–2599 (SQST…APQF), 2600–2707 (MTLE…LPSF), 2708–2813 (TQSQ…KPVF), 2814–2923 (ETSS…APVF), 2924–3028 (AHEV…SPVC), 3029–3130 (DQVA…PPVF), 3131–3235 (SSNH…PPVF), 3236–3340 (ERRD…PPRF), 3341–3445 (SQDV…SPVF), 3446–3550 (TPAN…KPTA), and 3551–3652 (IPLE…TIRF). N48 carries N-linked (GlcNAc...) asparagine glycosylation. N-linked (GlcNAc...) asparagine glycosylation occurs at N341. Residues N481, N562, N667, N799, N879, N898, and N1006 are each glycosylated (N-linked (GlcNAc...) asparagine). Residues N1367 and N1429 are each glycosylated (N-linked (GlcNAc...) asparagine). Residue N1751 is glycosylated (N-linked (GlcNAc...) asparagine). 3 N-linked (GlcNAc...) asparagine glycosylation sites follow: N1944, N1993, and N1996. Residues N2208, N2292, N2331, and N2467 are each glycosylated (N-linked (GlcNAc...) asparagine). N-linked (GlcNAc...) asparagine glycosylation is present at N2734. The N-linked (GlcNAc...) asparagine glycan is linked to N3000. An N-linked (GlcNAc...) asparagine glycan is attached at N3201. N3449, N3618, and N3741 each carry an N-linked (GlcNAc...) asparagine glycan. The EGF-like 1 domain occupies 3794–3832 (SNDPCVEKPCPEDMQCVGYEASRRPFLCQCPPGKLGECS). Intrachain disulfides connect C3798/C3809, C3803/C3821, and C3823/C3831. The Laminin G-like domain maps to 3834–4017 (HTSLSFAGNS…VGLTELKLGC (184 aa)). N3926 carries an N-linked (GlcNAc...) asparagine glycan. Intrachain disulfides connect C3984–C4017, C4024–C4035, C4029–C4045, C4047–C4056, C4063–C4074, C4068–C4083, C4085–C4094, C4101–C4112, C4106–C4121, and C4123–C4132. EGF-like domains are found at residues 4020 to 4057 (YPDACQRSPCLHGGSCSGLPSGGYQCSCLSQFTGTNCE) and 4059 to 4095 (EITACFPNPCRNGGSCDPIGNTFICSCKAGLTGVTCE). One can recognise an EGF-like 4; calcium-binding domain in the interval 4097 to 4133 (DVDECEREECENGGSCVNLFGSFFCNCTPGYVGQYCG). Residues 4154 to 4174 (LIGIAVVLFVIFTLIVLFIVF) traverse the membrane as a helical segment. Residues 4175-4555 (RKKVFRKNYS…FVETQHQTQV (381 aa)) are Cytoplasmic-facing. A compositionally biased stretch (polar residues) spans 4326–4343 (SNKGSNSEVQSLNSFQSD). Disordered stretches follow at residues 4326–4347 (SNKGSNSEVQSLNSFQSDSGDD), 4395–4424 (GGYDIDSEYPPPHEEEFLSQDQLPPPLPED), and 4452–4472 (PRFHPSQYLPPHPLPGETDLG). Omega-N-methylarginine occurs at positions 4508 and 4518.

As to expression, restricted to the nervous system. Abundantly expressed in the fetal brain.

Its subcellular location is the membrane. May play a role in the interactions between neurites derived from specific subsets of neurons during development. The polypeptide is Protocadherin Fat 3 (Fat3) (Rattus norvegicus (Rat)).